We begin with the raw amino-acid sequence, 358 residues long: Protein-glutamate methylesterase/protein-glutamine glutaminase 1 (358 aa).

Residues 7–124 (SVLLVDDSAV…KNFLIDSAAE (118 aa)) enclose the Response regulatory domain. Position 58 is a 4-aspartylphosphate (Asp-58). Residues 170-358 (AQTTERIVAI…QEIHQAILHR (189 aa)) form the CheB-type methylesterase domain. Catalysis depends on residues Ser-182, His-208, and Asp-304.

Belongs to the CheB family. Post-translationally, phosphorylated by CheA. Phosphorylation of the N-terminal regulatory domain activates the methylesterase activity.

The protein localises to the cytoplasm. The catalysed reaction is [protein]-L-glutamate 5-O-methyl ester + H2O = L-glutamyl-[protein] + methanol + H(+). It catalyses the reaction L-glutaminyl-[protein] + H2O = L-glutamyl-[protein] + NH4(+). Functionally, involved in chemotaxis. Part of a chemotaxis signal transduction system that modulates chemotaxis in response to various stimuli. Catalyzes the demethylation of specific methylglutamate residues introduced into the chemoreceptors (methyl-accepting chemotaxis proteins or MCP) by CheR. Also mediates the irreversible deamidation of specific glutamine residues to glutamic acid. This Pseudomonas savastanoi pv. phaseolicola (strain 1448A / Race 6) (Pseudomonas syringae pv. phaseolicola (strain 1448A / Race 6)) protein is Protein-glutamate methylesterase/protein-glutamine glutaminase 1.